The primary structure comprises 860 residues: MQEQYRPDLIEADVQKYWAEKKTFKAVKDPSKEKYYCLSMFPYPSGRLHMGHVRNYTIGDVISRYQRMNGKNVLQPMGWDAFGLPAEGAAIKNKTAPAKWTYENIEYMKNQLKVLGFGFDWDREITTCKPEYYKWEQWFFTELYKKGLVYKKTSTVNWCPNDETVLANEQVHEGCCWRCDTPVEQKEIPQWFIKITDYAEQLLSDLDQLPEWPDMVKTMQRNWIGRSEGVEITFNVAHSDQTLTVYTTRPDTFYGVSYLAVAAAHPLAESAAKNNPELAAFIHEAKNTKVAEAELATMEKKGMATGLYAVHPMTGKQLPIWVANFVLMHYGTGAVMAVPAHDQRDYEFAQKYQLPLFPVIKPADNSAWDFSKQAYTEHGITINSAEFDGLDFEATFNGIADKLEKIGVGKRQVNYRLRDWGVSRQRYWGAPIPMLTLENGDVVVAPLQDLPIVLPEDVVMDGVKSPIKADPEWAKTTYNGQAALKETDTFDTFMESSWYYARYTSPQYQQAMLDADEANYWLPVDQYIGGIEHATMHLLYFRFFHKLLRDAGFVTSDEPSKKLLCQGMVLADAFYYTSPTNERIWVSPTKVTLERDEKGRIIKAVDDEGHELVHSGMTKMSKSKNNGIDPQEMVEKYGADTVRLFMMFASPAEMTLEWQESGVEGANRFLRRLWNLVFEYNQNPAQTALDPTALSVEQKALRRDVHKTIAKVSDDIGRRQTFNTAIAAIMELMNKLTKASLSNEQDRAVMAEALNAVVRMLYPITPHICFQLWQDLGNESTIDFAPWVIADAEAMVEDEKLVVIQVNGKVRAKVTVPADMSEDEIKQVALAEENVQKFLNGLTVVKTIYVQGKLFSFVAK.

The 'HIGH' region motif lies at 42 to 52 (PYPSGRLHMGH). A 'KMSKS' region motif is present at residues 619–623 (KMSKS). Lysine 622 serves as a coordination point for ATP.

The protein belongs to the class-I aminoacyl-tRNA synthetase family.

The protein localises to the cytoplasm. It catalyses the reaction tRNA(Leu) + L-leucine + ATP = L-leucyl-tRNA(Leu) + AMP + diphosphate. In Histophilus somni (strain 129Pt) (Haemophilus somnus), this protein is Leucine--tRNA ligase.